A 421-amino-acid polypeptide reads, in one-letter code: 4-hydroxy-3-methylbut-2-en-1-yl diphosphate synthase (flavodoxin) (421 aa).

Residues Cys311, Cys314, Cys357, and Glu364 each coordinate [4Fe-4S] cluster.

It belongs to the IspG family. It depends on [4Fe-4S] cluster as a cofactor.

It catalyses the reaction (2E)-4-hydroxy-3-methylbut-2-enyl diphosphate + oxidized [flavodoxin] + H2O + 2 H(+) = 2-C-methyl-D-erythritol 2,4-cyclic diphosphate + reduced [flavodoxin]. It participates in isoprenoid biosynthesis; isopentenyl diphosphate biosynthesis via DXP pathway; isopentenyl diphosphate from 1-deoxy-D-xylulose 5-phosphate: step 5/6. Its function is as follows. Converts 2C-methyl-D-erythritol 2,4-cyclodiphosphate (ME-2,4cPP) into 1-hydroxy-2-methyl-2-(E)-butenyl 4-diphosphate. This chain is 4-hydroxy-3-methylbut-2-en-1-yl diphosphate synthase (flavodoxin), found in Xanthomonas axonopodis pv. citri (strain 306).